The following is a 493-amino-acid chain: Alpha-amylase-related protein (493 aa).

The N-terminal stretch at 1–19 (MFKFATAVILCLAASSTLA) is a signal peptide. Glutamine 20 bears the Pyrrolidone carboxylic acid mark. The cysteines at positions 47 and 103 are disulfide-linked. Positions 117, 168, and 177 each coordinate Ca(2+). Cysteines 156 and 170 form a disulfide. Arginine 205 is a chloride binding site. The Nucleophile role is filled by aspartate 207. Histidine 211 is a Ca(2+) binding site. Glutamate 244 (proton donor) is an active-site residue. Asparagine 307 and arginine 342 together coordinate chloride. 3 disulfide bridges follow: cysteine 375/cysteine 381, cysteine 417/cysteine 440, and cysteine 447/cysteine 459.

This sequence belongs to the glycosyl hydrolase 13 family. As to quaternary structure, monomer. Ca(2+) is required as a cofactor. Chloride serves as cofactor.

The protein resides in the secreted. It catalyses the reaction Endohydrolysis of (1-&gt;4)-alpha-D-glucosidic linkages in polysaccharides containing three or more (1-&gt;4)-alpha-linked D-glucose units.. The sequence is that of Alpha-amylase-related protein (Amyrel) from Drosophila ananassae (Fruit fly).